Here is a 71-residue protein sequence, read N- to C-terminus: DNA-directed RNA polymerase subunit omega (71 aa).

This sequence belongs to the RNA polymerase subunit omega family. As to quaternary structure, the RNAP catalytic core consists of 2 alpha, 1 beta, 1 beta' and 1 omega subunit. When a sigma factor is associated with the core the holoenzyme is formed, which can initiate transcription.

It carries out the reaction RNA(n) + a ribonucleoside 5'-triphosphate = RNA(n+1) + diphosphate. In terms of biological role, promotes RNA polymerase assembly. Latches the N- and C-terminal regions of the beta' subunit thereby facilitating its interaction with the beta and alpha subunits. The polypeptide is DNA-directed RNA polymerase subunit omega (Campylobacter concisus (strain 13826)).